We begin with the raw amino-acid sequence, 329 residues long: Phosphate acetyltransferase (329 aa).

It belongs to the phosphate acetyltransferase and butyryltransferase family.

Its subcellular location is the cytoplasm. The catalysed reaction is acetyl-CoA + phosphate = acetyl phosphate + CoA. Its pathway is metabolic intermediate biosynthesis; acetyl-CoA biosynthesis; acetyl-CoA from acetate: step 2/2. This chain is Phosphate acetyltransferase (pta), found in Staphylococcus epidermidis (strain ATCC 12228 / FDA PCI 1200).